A 529-amino-acid chain; its full sequence is Bifunctional purine biosynthesis protein PurH (529 aa).

In terms of domain architecture, MGS-like spans 2 to 148 (QHLRPIRRAL…KNHKDVTIVV (147 aa)).

It belongs to the PurH family.

The enzyme catalyses (6R)-10-formyltetrahydrofolate + 5-amino-1-(5-phospho-beta-D-ribosyl)imidazole-4-carboxamide = 5-formamido-1-(5-phospho-D-ribosyl)imidazole-4-carboxamide + (6S)-5,6,7,8-tetrahydrofolate. The catalysed reaction is IMP + H2O = 5-formamido-1-(5-phospho-D-ribosyl)imidazole-4-carboxamide. Its pathway is purine metabolism; IMP biosynthesis via de novo pathway; 5-formamido-1-(5-phospho-D-ribosyl)imidazole-4-carboxamide from 5-amino-1-(5-phospho-D-ribosyl)imidazole-4-carboxamide (10-formyl THF route): step 1/1. The protein operates within purine metabolism; IMP biosynthesis via de novo pathway; IMP from 5-formamido-1-(5-phospho-D-ribosyl)imidazole-4-carboxamide: step 1/1. The protein is Bifunctional purine biosynthesis protein PurH of Proteus mirabilis (strain HI4320).